Reading from the N-terminus, the 85-residue chain is Phosphoribosyl-AMP cyclohydrolase (85 aa).

Residue aspartate 48 coordinates Mg(2+). Cysteine 49 contributes to the Zn(2+) binding site. Mg(2+) is bound by residues aspartate 50 and aspartate 52. Residues cysteine 65 and cysteine 72 each contribute to the Zn(2+) site.

Belongs to the PRA-CH family. As to quaternary structure, homodimer. Mg(2+) is required as a cofactor. Zn(2+) serves as cofactor.

It is found in the cytoplasm. The catalysed reaction is 1-(5-phospho-beta-D-ribosyl)-5'-AMP + H2O = 1-(5-phospho-beta-D-ribosyl)-5-[(5-phospho-beta-D-ribosylamino)methylideneamino]imidazole-4-carboxamide. It functions in the pathway amino-acid biosynthesis; L-histidine biosynthesis; L-histidine from 5-phospho-alpha-D-ribose 1-diphosphate: step 3/9. Catalyzes the hydrolysis of the adenine ring of phosphoribosyl-AMP. The polypeptide is Phosphoribosyl-AMP cyclohydrolase (hisI) (Saccharolobus solfataricus (strain ATCC 35092 / DSM 1617 / JCM 11322 / P2) (Sulfolobus solfataricus)).